The primary structure comprises 559 residues: DNA primase (559 aa).

A CHC2-type zinc finger spans residues 37–61; sequence CPFHEERSASFSVNQVKGFYYCFGC. Residues 246–327 enclose the Toprim domain; the sequence is KQVIVTEGYL…KGGVILFENN (82 aa). Residues Glu252, Asp296, and Asp298 each contribute to the Mg(2+) site.

It belongs to the DnaG primase family. As to quaternary structure, monomer. Interacts with DnaB. Requires Zn(2+) as cofactor. Mg(2+) serves as cofactor.

It carries out the reaction ssDNA + n NTP = ssDNA/pppN(pN)n-1 hybrid + (n-1) diphosphate.. RNA polymerase that catalyzes the synthesis of short RNA molecules used as primers for DNA polymerase during DNA replication. The polypeptide is DNA primase (Helicobacter pylori (strain J99 / ATCC 700824) (Campylobacter pylori J99)).